The sequence spans 163 residues: 6,7-dimethyl-8-ribityllumazine synthase (163 aa).

5-amino-6-(D-ribitylamino)uracil contacts are provided by residues Phe27, 58–60 (ALE), and 87–89 (CVV). Residue 92-93 (DT) participates in (2S)-2-hydroxy-3-oxobutyl phosphate binding. Residue His95 is the Proton donor of the active site. Residue Asn120 coordinates 5-amino-6-(D-ribitylamino)uracil. Residue Arg134 participates in (2S)-2-hydroxy-3-oxobutyl phosphate binding.

It belongs to the DMRL synthase family.

It carries out the reaction (2S)-2-hydroxy-3-oxobutyl phosphate + 5-amino-6-(D-ribitylamino)uracil = 6,7-dimethyl-8-(1-D-ribityl)lumazine + phosphate + 2 H2O + H(+). It participates in cofactor biosynthesis; riboflavin biosynthesis; riboflavin from 2-hydroxy-3-oxobutyl phosphate and 5-amino-6-(D-ribitylamino)uracil: step 1/2. Functionally, catalyzes the formation of 6,7-dimethyl-8-ribityllumazine by condensation of 5-amino-6-(D-ribitylamino)uracil with 3,4-dihydroxy-2-butanone 4-phosphate. This is the penultimate step in the biosynthesis of riboflavin. This Nitrobacter hamburgensis (strain DSM 10229 / NCIMB 13809 / X14) protein is 6,7-dimethyl-8-ribityllumazine synthase.